A 284-amino-acid chain; its full sequence is 4-diphosphocytidyl-2-C-methyl-D-erythritol kinase (284 aa).

K14 is a catalytic residue. P98–S108 serves as a coordination point for ATP. The active site involves D140.

This sequence belongs to the GHMP kinase family. IspE subfamily.

The catalysed reaction is 4-CDP-2-C-methyl-D-erythritol + ATP = 4-CDP-2-C-methyl-D-erythritol 2-phosphate + ADP + H(+). The protein operates within isoprenoid biosynthesis; isopentenyl diphosphate biosynthesis via DXP pathway; isopentenyl diphosphate from 1-deoxy-D-xylulose 5-phosphate: step 3/6. Its function is as follows. Catalyzes the phosphorylation of the position 2 hydroxy group of 4-diphosphocytidyl-2C-methyl-D-erythritol. This Shewanella sp. (strain ANA-3) protein is 4-diphosphocytidyl-2-C-methyl-D-erythritol kinase.